The primary structure comprises 122 residues: Fluoride-specific ion channel FluC 2 (122 aa).

The next 4 helical transmembrane spans lie at 1–21 (MAWL…FLLS), 33–53 (PLGT…LLAL), 62–82 (VTLA…TFTY), and 102–122 (GSIL…GSLF). Na(+) is bound by residues G72 and T75.

The protein belongs to the fluoride channel Fluc/FEX (TC 1.A.43) family.

The protein resides in the cell membrane. It carries out the reaction fluoride(in) = fluoride(out). Its activity is regulated as follows. Na(+) is not transported, but it plays an essential structural role and its presence is essential for fluoride channel function. Fluoride-specific ion channel. Important for reducing fluoride concentration in the cell, thus reducing its toxicity. In Moorella thermoacetica (strain ATCC 39073 / JCM 9320), this protein is Fluoride-specific ion channel FluC 2.